Reading from the N-terminus, the 316-residue chain is Coiled-coil domain-containing protein 130 homolog (316 aa).

Residues 182–203 are a coiled coil; that stretch reads ANSRLRAEFRQQKKEINGQQEL. Positions 287–316 are disordered; that stretch reads KLEETTSSATNEKPISLVGDYSSSDNDSNG.

It belongs to the CWC16 family.

In Drosophila melanogaster (Fruit fly), this protein is Coiled-coil domain-containing protein 130 homolog.